The primary structure comprises 378 residues: UPF0754 membrane protein BCA_0919 (378 aa).

Helical transmembrane passes span 1 to 21 and 357 to 377; these read MNIW…GGFT and YLGA…LLFL.

It belongs to the UPF0754 family.

It localises to the cell membrane. This chain is UPF0754 membrane protein BCA_0919, found in Bacillus cereus (strain 03BB102).